The primary structure comprises 247 residues: Isoprenyl transferase (247 aa).

D18 is an active-site residue. A Mg(2+)-binding site is contributed by D18. Substrate-binding positions include 19–22 (GNGR), W23, R31, H35, and 63–65 (SSE). N66 acts as the Proton acceptor in catalysis. Residues W67, R69, R186, and 192–194 (RLS) each bind substrate. Residue E205 coordinates Mg(2+).

It belongs to the UPP synthase family. In terms of assembly, homodimer. Mg(2+) is required as a cofactor.

In terms of biological role, catalyzes the condensation of isopentenyl diphosphate (IPP) with allylic pyrophosphates generating different type of terpenoids. The polypeptide is Isoprenyl transferase (Rhizobium meliloti (strain 1021) (Ensifer meliloti)).